The chain runs to 90 residues: Probable Fe(2+)-trafficking protein (90 aa).

It belongs to the Fe(2+)-trafficking protein family.

Could be a mediator in iron transactions between iron acquisition and iron-requiring processes, such as synthesis and/or repair of Fe-S clusters in biosynthetic enzymes. In Pseudomonas syringae pv. tomato (strain ATCC BAA-871 / DC3000), this protein is Probable Fe(2+)-trafficking protein.